The sequence spans 2748 residues: Chalcone synthase cfoA (2748 aa).

The segment at 13–511 is adenylation (A) domain; the sequence is RHAGESCEKV…DTVPRTVIGK (499 aa). Residues 535-620 form the Carrier 1 domain; sequence DLIEALVMAE…AVSTYLHGRL (86 aa). Position 579 is an O-(pantetheine 4'-phosphoryl)serine (Ser579). One can recognise a Ketosynthase family 3 (KS3) domain in the interval 641 to 1073; that stretch reads VEPIAIVSMA…GTNSHIILEQ (433 aa). Residues Cys813, His948, and His995 each act as for beta-ketoacyl synthase activity in the active site. Positions 1196–1489 constitute a Malonyl-CoA:ACP transacylase (MAT) domain; sequence FSGQGSWMPT…ATHGTVDKLL (294 aa). The segment at 1561-1842 is dehydratase (DH) domain; that stretch reads LGHEMIFNAT…ENSFSMTMTD (282 aa). Residues 1563–1707 are N-terminal hotdog fold; that stretch reads HEMIFNATSI…GTFQLISQPN (145 aa). In terms of domain architecture, PKS/mFAS DH spans 1563 to 1866; that stretch reads HEMIFNATSI…LRTWQPTVAG (304 aa). The active-site Proton acceptor; for dehydratase activity is the His1595. A C-terminal hotdog fold region spans residues 1722 to 1866; it reads AESDVNISEA…LRTWQPTVAG (145 aa). Catalysis depends on Asp1784, which acts as the Proton donor; for dehydratase activity. A Ketoreductase (KR) domain is found at 2031 to 2210; that stretch reads GTVLITGGTG…ALSLAWGPWA (180 aa). In terms of domain architecture, Carrier 2 spans 2305–2383; sequence NRHDTLLGLV…ALVEYLLPRI (79 aa). Ser2342 is modified (O-(pantetheine 4'-phosphoryl)serine). The interval 2386-2426 is disordered; that stretch reads EPQPEVDTDSDASTTAGDTSVSRDSGKEDELSPSSSVTTLA. Positions 2396-2407 are enriched in low complexity; that stretch reads DASTTAGDTSVS. Residues 2519 to 2742 are thioester reductase (TE) domain; it reads VGLSVYSNLA…GAAGEIERWA (224 aa).

This sequence in the N-terminal section; belongs to the NRP synthetase family. Pantetheine 4'-phosphate serves as cofactor.

It participates in secondary metabolite biosynthesis; flavonoid biosynthesis. Its function is as follows. Hybrid PKS-NRPS synthetase; part of the gene cluster that mediates the biosynthesis of chlorflavonin, a fungal flavonoid with acetolactate synthase inhibitory activity. Within the pathway, the PKS-NRPS cfoA, is responsible for the generation of the key precursor chalcone. The adenylation (A) domain activates benzoic acid or p-hydroxybenzoic acid which are transferred to the thiol group of the pantetheinyl residue of the T domain, and further transferred to the adjacent PKS portion of cfoA. Within the PKS portion of cfoA, benzoic acid or p-hydroxybenzoic acid act as starter units for respectively four malonyl-CoA molecules for elongation by the AT and KS domains. Afterwards, chalcone is cyclized through Claisen condensation and thereby released either spontaneously or catalyzed by the TE domain. Then, a new type of chalcone isomerase, cfoK, catalyzes the conversion of the chalcone into a flavanone by a histidine-mediated oxa-Michael addition mechanism. The desaturation of flavanone to flavone is catalyzed by a new type of flavone synthase, the flavin mononucleotide (FMN)-dependent oxidoreductase cfoJ. Monooxygenases cfoF, cfoG, and P450 cfoH are responsible for the hydroxylation of the flavonoid skeleton at sites C3, C8, and C2', respectively. Like cfoF, the dehydratase cfoI plays also a role in the hydroxylation of position C3. Methyltransferases cfoB, cfoC, and cfoD then catalyze the methylation of C7-OH, C8-OH, and C3-OH, respectively. Finally, the monooxygenase cfoE is responsible for the chlorination of flavonoid at position C3'. The polypeptide is Chalcone synthase cfoA (Aspergillus candidus).